Here is a 118-residue protein sequence, read N- to C-terminus: Large ribosomal subunit protein bL20 (118 aa).

Belongs to the bacterial ribosomal protein bL20 family.

Functionally, binds directly to 23S ribosomal RNA and is necessary for the in vitro assembly process of the 50S ribosomal subunit. It is not involved in the protein synthesizing functions of that subunit. This chain is Large ribosomal subunit protein bL20, found in Pseudomonas syringae pv. syringae (strain B728a).